Reading from the N-terminus, the 171-residue chain is Co-chaperone protein HscB (171 aa).

The J domain occupies 2 to 74 (DYFTLFGLPA…LTRAEYLLSL (73 aa)).

This sequence belongs to the HscB family. Interacts with HscA and stimulates its ATPase activity. Interacts with IscU.

In terms of biological role, co-chaperone involved in the maturation of iron-sulfur cluster-containing proteins. Seems to help targeting proteins to be folded toward HscA. This Salmonella typhimurium (strain LT2 / SGSC1412 / ATCC 700720) protein is Co-chaperone protein HscB.